The chain runs to 60 residues: Small ribosomal subunit protein bS21 (60 aa).

Residues 38-60 form a disordered region; it reads KGVKRREKEKAARKRLQKKHRMY.

This sequence belongs to the bacterial ribosomal protein bS21 family.

The protein is Small ribosomal subunit protein bS21 of Mycoplasmoides gallisepticum (strain R(low / passage 15 / clone 2)) (Mycoplasma gallisepticum).